Consider the following 217-residue polypeptide: Probable transaldolase (217 aa).

Lys83 functions as the Schiff-base intermediate with substrate in the catalytic mechanism.

The protein belongs to the transaldolase family. Type 3B subfamily.

The protein resides in the cytoplasm. The catalysed reaction is D-sedoheptulose 7-phosphate + D-glyceraldehyde 3-phosphate = D-erythrose 4-phosphate + beta-D-fructose 6-phosphate. It functions in the pathway carbohydrate degradation; pentose phosphate pathway; D-glyceraldehyde 3-phosphate and beta-D-fructose 6-phosphate from D-ribose 5-phosphate and D-xylulose 5-phosphate (non-oxidative stage): step 2/3. Transaldolase is important for the balance of metabolites in the pentose-phosphate pathway. The polypeptide is Probable transaldolase (Bartonella quintana (strain Toulouse) (Rochalimaea quintana)).